A 372-amino-acid polypeptide reads, in one-letter code: Glutamate 5-kinase (372 aa).

Lysine 14 provides a ligand contact to ATP. Substrate-binding residues include serine 54, aspartate 141, and asparagine 153. An ATP-binding site is contributed by 173–174 (TD). Residues 280–358 (RGHVVIDAGA…GEIESVLGYM (79 aa)) form the PUA domain.

The protein belongs to the glutamate 5-kinase family.

Its subcellular location is the cytoplasm. The enzyme catalyses L-glutamate + ATP = L-glutamyl 5-phosphate + ADP. The protein operates within amino-acid biosynthesis; L-proline biosynthesis; L-glutamate 5-semialdehyde from L-glutamate: step 1/2. Functionally, catalyzes the transfer of a phosphate group to glutamate to form L-glutamate 5-phosphate. In Burkholderia multivorans (strain ATCC 17616 / 249), this protein is Glutamate 5-kinase.